Reading from the N-terminus, the 2095-residue chain is Oxygen-regulated protein 1 (2095 aa).

Doublecortin domains are found at residues 35-117 and 157-236; these read KRIS…VDLD and RRLV…GNYD. 5 disordered regions span residues 358-379, 643-688, 863-887, 1400-1430, and 1572-1595; these read GLSN…DYGP, ENRK…GKIP, GAEV…PDFP, NKKK…SSER, and SGYP…EPTR. The span at 1405–1419 shows a compositional bias: basic and acidic residues; sequence ISSDKEESRTSEEPR. Residues 1420 to 1430 are compositionally biased toward polar residues; that stretch reads SITNSMTSSER. Residues 1583–1595 show a composition bias toward basic and acidic residues; that stretch reads HNDDSGQEKEPTR.

As to quaternary structure, interacts (via the doublecortin domains) with microtubules. Interacts with RP1L1. Interacts with MAK. Expressed in the cell bodies and inner segments of photoreceptors. Not found in liver, spleen, kidney, brain, thymus, muscle, heart, lung and testis.

It localises to the cytoplasm. Its subcellular location is the cytoskeleton. It is found in the cilium axoneme. The protein localises to the cell projection. The protein resides in the cilium. It localises to the photoreceptor outer segment. Its function is as follows. Microtubule-associated protein regulating the stability and length of the microtubule-based axoneme of photoreceptors. Required for the differentiation of photoreceptor cells, it plays a role in the organization of the outer segment of rod and cone photoreceptors ensuring the correct orientation and higher-order stacking of outer segment disks along the photoreceptor axoneme. The chain is Oxygen-regulated protein 1 (Rp1) from Mus musculus (Mouse).